We begin with the raw amino-acid sequence, 488 residues long: Rhamnulokinase (488 aa).

13–17 (ASSGR) lines the ATP pocket. A disulfide bond links Cys68 and Cys222. Substrate-binding positions include Gly83 and 236 to 238 (HDT). Residue Asp237 is the Proton acceptor of the active site. Thr259 is a binding site for ATP. Asn296 contacts substrate. Gln304 provides a ligand contact to ATP. Cysteines 353 and 370 form a disulfide. Gly402 is an ATP binding site. Cysteines 413 and 417 form a disulfide.

It belongs to the rhamnulokinase family. Requires Mg(2+) as cofactor.

The catalysed reaction is L-rhamnulose + ATP = L-rhamnulose 1-phosphate + ADP + H(+). The protein operates within carbohydrate degradation; L-rhamnose degradation; glycerone phosphate from L-rhamnose: step 2/3. Functionally, involved in the catabolism of L-rhamnose (6-deoxy-L-mannose). Catalyzes the transfer of the gamma-phosphate group from ATP to the 1-hydroxyl group of L-rhamnulose to yield L-rhamnulose 1-phosphate. This is Rhamnulokinase from Klebsiella pneumoniae (strain 342).